We begin with the raw amino-acid sequence, 311 residues long: Tricarboxylate transport protein, mitochondrial (311 aa).

Residues Met1 to Ala13 constitute a propeptide, removed in mature form. Solcar repeat units lie at residues Thr23–His111, Thr122–Trp208, and Met218–Leu303. 3 helical membrane passes run Ile29–Thr46, Gly86–Phe105, and Leu129–Met143. The residue at position 156 (Ser156) is a Phosphoserine. The next 3 helical transmembrane spans lie at Gly183–Met202, Gly224–Leu241, and Gly278–Tyr297.

It belongs to the mitochondrial carrier (TC 2.A.29) family. In terms of processing, possesses a short cleavable presequence, which, however, is found to be dispensable both for targeting to mitochondria and insertion into the inner membrane. However, the presequence is required to keep SLC25A1 in a soluble state and thus in an import-competent state. Mature SLC25A1 lacking the presequence is prone to aggregation.

The protein resides in the mitochondrion inner membrane. It catalyses the reaction (S)-malate(in) + citrate(out) = (S)-malate(out) + citrate(in). The catalysed reaction is D-threo-isocitrate(in) + citrate(out) = D-threo-isocitrate(out) + citrate(in). It carries out the reaction citrate(out) + succinate(in) = citrate(in) + succinate(out). The enzyme catalyses cis-aconitate(in) + citrate(out) = cis-aconitate(out) + citrate(in). It catalyses the reaction trans-aconitate(in) + citrate(out) = trans-aconitate(out) + citrate(in). The catalysed reaction is phosphoenolpyruvate(in) + citrate(out) = phosphoenolpyruvate(out) + citrate(in). It carries out the reaction maleate(in) + citrate(out) = maleate(out) + citrate(in). In terms of biological role, mitochondrial electroneutral antiporter that exports citrate from the mitochondria into the cytosol in exchange for malate. Also able to mediate the exchange of citrate for isocitrate, phosphoenolpyruvate, cis-aconitate and to a lesser extent trans-aconitate, maleate and succinate. In the cytoplasm, citrate plays important roles in fatty acid and sterol synthesis, regulation of glycolysis, protein acetylation, and other physiopathological processes. The protein is Tricarboxylate transport protein, mitochondrial (SLC25A1) of Homo sapiens (Human).